Here is a 248-residue protein sequence, read N- to C-terminus: Coproheme decarboxylase (248 aa).

Residues R130, 144 to 148 (YPMDK), H171, Q184, and S222 each bind Fe-coproporphyrin III. Residue Y144 is part of the active site.

The protein belongs to the ChdC family. Type 1 subfamily. The cofactor is Fe-coproporphyrin III.

It carries out the reaction Fe-coproporphyrin III + 2 H2O2 + 2 H(+) = heme b + 2 CO2 + 4 H2O. The enzyme catalyses Fe-coproporphyrin III + H2O2 + H(+) = harderoheme III + CO2 + 2 H2O. It catalyses the reaction harderoheme III + H2O2 + H(+) = heme b + CO2 + 2 H2O. Its pathway is porphyrin-containing compound metabolism; protoheme biosynthesis. Its function is as follows. Involved in coproporphyrin-dependent heme b biosynthesis. Catalyzes the decarboxylation of Fe-coproporphyrin III (coproheme) to heme b (protoheme IX), the last step of the pathway. The reaction occurs in a stepwise manner with a three-propionate intermediate. The sequence is that of Coproheme decarboxylase from Geobacillus sp. (strain WCH70).